The primary structure comprises 258 residues: MASDDSVPQHSVEKTTEYESSDRGLFDFMKKEEKDETKVIATEFEEKVQVSEPEPKYEDCKVVEEEEEKAAKPSLLEKLHRSGSSSSSSSSDEEVEEGGEKKKKKEKKGLKEKIEEKIHHKEEDTSVPVEVVTEPEKKKGFMEKIKEKLPGGGKKVEEETVAPPPPPAAAPVDCAVEGDPAKKGILEKIKEKIPGYHPKTSTEEEKKDNDCASAKLIIRCLDRMFDYYYYASFSCGVGLILCFDPLLWGPLISFGTSG.

Disordered regions lie at residues 1-25 (MASD…DRGL), 46-131 (EKVQ…PVEV), and 148-175 (KLPG…VDCA). Composition is skewed to basic and acidic residues over residues 11 to 25 (SVEK…DRGL), 46 to 80 (EKVQ…EKLH), 109 to 124 (GLKE…KEED), and 148 to 158 (KLPGGGKKVEE).

It belongs to the plant dehydrin family. Post-translationally, phosphorylated in embryogenic and somatic embryos. Not phosphorylated in non-embryogenic cells.

Its function is as follows. Phosphorylation of ECCP44 protein is thought to be involved in the acquisition of embryogenic competence. Unlike other dehydrins, it is not thought to function as an environmental stress tolerant. The chain is Phosphoprotein ECPP44 (ECPP44) from Daucus carota (Wild carrot).